A 147-amino-acid chain; its full sequence is Histone H3.X (147 aa).

Positions 1–16 (MARTKQTARKATAWQA) are enriched in low complexity. A disordered region spans residues 1–43 (MARTKQTARKATAWQAPRKPLATKAARKRASPTGGIKKPHRYK). Asymmetric dimethylarginine is present on Arg3. Citrulline; alternate is present on Arg3. Phosphothreonine is present on Thr4. Lys5 bears the Allysine; alternate mark. An N6,N6,N6-trimethyllysine; alternate modification is found at Lys5. N6,N6-dimethyllysine; alternate is present on Lys5. Lys5 carries the post-translational modification N6-(2-hydroxyisobutyryl)lysine; alternate. Residue Lys5 is modified to N6-(beta-hydroxybutyryl)lysine; alternate. The residue at position 5 (Lys5) is an N6-acetyllysine; alternate. N6-crotonyllysine; alternate is present on Lys5. Residue Lys5 is modified to N6-methyllysine; alternate. Gln6 carries the 5-glutamyl dopamine; alternate modification. Gln6 is modified (5-glutamyl serotonin; alternate). Position 7 is a phosphothreonine (Thr7). A Citrulline; alternate modification is found at Arg9. The residue at position 9 (Arg9) is a Symmetric dimethylarginine. Lys10 bears the N6,N6,N6-trimethyllysine; alternate mark. Residue Lys10 is modified to N6,N6-dimethyllysine; alternate. Residue Lys10 is modified to N6-(2-hydroxyisobutyryl)lysine; alternate. Position 10 is an N6-(beta-hydroxybutyryl)lysine; alternate (Lys10). At Lys10 the chain carries N6-acetyllysine; alternate. An N6-crotonyllysine; alternate modification is found at Lys10. Lys10 carries the post-translational modification N6-methyllysine; alternate. Lys10 carries the N6-butyryllysine; alternate modification. Lys10 carries the post-translational modification N6-lactoyllysine; alternate. Thr12 carries the post-translational modification Phosphothreonine. Arg18 bears the Asymmetric dimethylarginine mark. The residue at position 18 (Arg18) is a Citrulline; alternate. 2 positions are modified to N6-(2-hydroxyisobutyryl)lysine; alternate: Lys19 and Lys24. Residues Lys19 and Lys24 each carry the N6-(beta-hydroxybutyryl)lysine; alternate modification. Residues Lys19 and Lys24 each carry the N6-acetyllysine; alternate modification. N6-crotonyllysine; alternate is present on residues Lys19 and Lys24. Residues Lys19 and Lys24 each carry the N6-methyllysine; alternate modification. An N6-butyryllysine; alternate mark is found at Lys19 and Lys24. Lys19 and Lys24 each carry N6-lactoyllysine; alternate. Residues Lys19 and Lys24 each carry the N6-glutaryllysine; alternate modification. Arg27 carries the citrulline modification. Residues Lys28 and Lys37 each carry the N6,N6,N6-trimethyllysine; alternate modification. Residues Lys28 and Lys37 each carry the N6,N6-dimethyllysine; alternate modification. Lys28 and Lys37 each carry N6-(2-hydroxyisobutyryl)lysine; alternate. Lys28 is modified (N6-(beta-hydroxybutyryl)lysine; alternate). 2 positions are modified to N6-acetyllysine; alternate: Lys28 and Lys37. Position 28 is an N6-crotonyllysine; alternate (Lys28). An N6-methyllysine; alternate mark is found at Lys28 and Lys37. At Lys28 the chain carries N6-lactoyllysine; alternate. At Lys28 the chain carries N6-glutaryllysine; alternate. Lys38 carries the post-translational modification N6-methyllysine. Tyr42 bears the Phosphotyrosine mark. The residue at position 57 (Lys57) is an N6,N6,N6-trimethyllysine; alternate. Residue Lys57 is modified to N6-(2-hydroxyisobutyryl)lysine; alternate. Residue Lys57 is modified to N6-(beta-hydroxybutyryl)lysine; alternate. Lys57 is subject to N6-acetyllysine; alternate. An N6-crotonyllysine; alternate modification is found at Lys57. Lys57 carries the N6-lactoyllysine; alternate modification. The residue at position 57 (Lys57) is an N6-glutaryllysine; alternate. Residue Lys57 is modified to N6-methyllysine. N6-succinyllysine; alternate is present on Lys57. Position 58 is a phosphoserine (Ser58). Lys65 is modified (N6-(2-hydroxyisobutyryl)lysine; alternate). Residue Lys65 is modified to N6-methyllysine; alternate. The residue at position 87 (Ser87) is a Phosphoserine. The residue at position 108 (Thr108) is a Phosphothreonine.

Belongs to the histone H3 family. As to quaternary structure, the nucleosome is a histone octamer containing two molecules each of H2A, H2B, H3 and H4 assembled in one H3-H4 heterotetramer and two H2A-H2B heterodimers. The octamer wraps approximately 147 bp of DNA. Acetylation is generally linked to gene activation. Acetylation on Lys-10 (H3K9ac) impairs methylation at Arg-9 (H3R8me2s). Acetylation on Lys-19 (H3K18ac) and Lys-24 (H3K24ac) favors methylation at Arg-18 (H3R17me). In terms of processing, citrullination at Arg-9 (H3R8ci) and/or Arg-18 (H3R17ci) impairs methylation and represses transcription. Post-translationally, asymmetric dimethylation at Arg-18 (H3R17me2a) is linked to gene activation. Symmetric dimethylation at Arg-9 (H3R8me2s) is linked to gene repression. Asymmetric dimethylation at Arg-3 (H3R2me2a) is linked to gene repression and is mutually exclusive with H3 Lys-5 methylation (H3K4me2 and H3K4me3). H3R2me2a is present at the 3' of genes regardless of their transcription state and is enriched on inactive promoters, while it is absent on active promoters. Methylation at Lys-5 (H3K4me) facilitates subsequent acetylation of H3 and H4. Methylation at Lys-10 (H3K9me) and Lys-28 (H3K27me), which are linked to gene repression, are underrepresented. Methylation at Lys-10 (H3K9me) is a specific target for HP1 proteins (CBX1, CBX3 and CBX5) and prevents subsequent acetylation of H3 and H4. In terms of processing, phosphorylation at Thr-7 (H3T6ph) is a specific tag for epigenetic transcriptional activation that prevents demethylation of Lys-5 (H3K4me) by LSD1/KDM1A. At centromeres, specifically phosphorylated at Thr-12 (H3T11ph) from prophase to early anaphase. Phosphorylation at Thr-12 (H3T11ph) is a specific tag for epigenetic transcriptional activation that promotes demethylation of Lys-10 (H3K9me). Phosphorylation at Tyr-42 (H3Y41ph) promotes exclusion of CBX5 (HP1 alpha) from chromatin. Post-translationally, lysine deamination at Lys-5 (H3K4all) to form allysine. Allysine formation only takes place on H3K4me3 and results in gene repression. Crotonylation (Kcr) is specifically present in male germ cells and marks testis-specific genes in post-meiotic cells, including X-linked genes that escape sex chromosome inactivation in haploid cells. Crotonylation marks active promoters and enhancers and confers resistance to transcriptional repressors. It is also associated with post-meiotically activated genes on autosomes. In terms of processing, butyrylation of histones marks active promoters and competes with histone acetylation. It is present during late spermatogenesis. As to expression, expressed at low level in some tissues, such as testis and brain.

It localises to the nucleus. The protein localises to the chromosome. Primate-specific variant histone H3, which constitutes a core component of nucleosomes. Nucleosomes wrap and compact DNA into chromatin, limiting DNA accessibility to the cellular machineries which require DNA as a template. Histones thereby play a central role in transcription regulation, DNA repair, DNA replication and chromosomal stability. DNA accessibility is regulated via a complex set of post-translational modifications of histones, also called histone code, and nucleosome remodeling. The sequence is that of Histone H3.X from Homo sapiens (Human).